A 269-amino-acid polypeptide reads, in one-letter code: Probable membrane transporter protein YfcA (269 aa).

Residues 1–7 (METFNSL) are Periplasmic-facing. Residues 8–28 (FMVSPLLLGVLFFVAMLAGFI) form a helical membrane-spanning segment. Residues 29–30 (DS) lie on the Cytoplasmic side of the membrane. The helical transmembrane segment at 31–51 (IAGGGGLLTIPALMAAGMSPA) threads the bilayer. The Periplasmic segment spans residues 52-84 (NALATNKLQACGGSISATIYFIRRKVVSLSDQK). Residues 85 to 105 (LNIAMTFVGSMSGALLVQYVQ) form a helical membrane-spanning segment. Topologically, residues 106-111 (ADVLRQ) are cytoplasmic. Residues 112-132 (ILPILVICIGLYFLLMPKLGE) form a helical membrane-spanning segment. At 133 to 156 (EDRQRRMYGLPFALIAGGCVGFYD) the chain is on the periplasmic side. A helical membrane pass occupies residues 157 to 177 (GFFGPAAGSFYALAFVTLCGF). Topologically, residues 178 to 197 (NLAKATAHAKLLNATSNIGG) are cytoplasmic. The helical transmembrane segment at 198–218 (LLLFILGGKVIWATGFVMLVG) threads the bilayer. Topologically, residues 219-269 (QFLGARMGSRLVLSKGQKLIRPMIVIVSAVMSAKLLYDSHGQEILHWLGMN) are periplasmic.

Belongs to the 4-toluene sulfonate uptake permease (TSUP) (TC 2.A.102) family.

It localises to the cell inner membrane. The chain is Probable membrane transporter protein YfcA (yfcA) from Escherichia coli O157:H7.